A 651-amino-acid chain; its full sequence is Peptide-N(4)-(N-acetyl-beta-glucosaminyl)asparagine amidase (651 aa).

N-acetylalanine is present on Ala2. The 62-residue stretch at 30–91 folds into the PUB domain; that stretch reads EASKLLLTYA…EGETHLIFPK (62 aa). Residues 116–153 form a disordered region; sequence SSQKVEFSQHPAAVRLPAEQPEDPTGLMQHSGNQPGQP. The segment covering 143 to 152 has biased composition (polar residues); the sequence is MQHSGNQPGQ. Residues Cys247, Cys250, Cys280, and Cys283 each coordinate Zn(2+). Cys306 serves as the catalytic Nucleophile. Residues His333 and Asp350 contribute to the active site. A PAW domain is found at 451 to 651; the sequence is ELGGRVSGSL…LEIIITFSDL (201 aa).

The protein belongs to the transglutaminase-like superfamily. PNGase family. Component of a complex required to couple retrotranslocation, ubiquitination and deglycosylation composed of NGLY1, SAKS1, AMFR, VCP and RAD23B. Interacts with the proteasome components RAD23B and PSMC1. Interacts with directly with VCP. Interacts with DERL1, bringing it close to the endoplasmic reticulum membrane. Interacts with SAKS1. The cofactor is Zn(2+).

The protein resides in the cytoplasm. It catalyses the reaction Hydrolysis of an N(4)-(acetyl-beta-D-glucosaminyl)asparagine residue in which the glucosamine residue may be further glycosylated, to yield a (substituted) N-acetyl-beta-D-glucosaminylamine and a peptide containing an aspartate residue.. With respect to regulation, inhibited by Z-VAD-fmk, a well-known caspase inhibitor, which inhibits enzyme activity through covalent binding of the carbohydrate to the single Cys-306 residue. In terms of biological role, specifically deglycosylates the denatured form of N-linked glycoproteins in the cytoplasm and assists their proteasome-mediated degradation. Cleaves the beta-aspartyl-glucosamine (GlcNAc) of the glycan and the amide side chain of Asn, converting Asn to Asp. Prefers proteins containing high-mannose over those bearing complex type oligosaccharides. Can recognize misfolded proteins in the endoplasmic reticulum that are exported to the cytosol to be destroyed and deglycosylate them, while it has no activity toward native proteins. Deglycosylation is a prerequisite for subsequent proteasome-mediated degradation of some, but not all, misfolded glycoproteins. The chain is Peptide-N(4)-(N-acetyl-beta-glucosaminyl)asparagine amidase (Ngly1) from Rattus norvegicus (Rat).